The primary structure comprises 812 residues: Lon protease (812 aa).

A Lon N-terminal domain is found at 11-204 (IPVLPLRDVV…YLMAMMESEI (194 aa)). 356-363 (GPPGVGKT) provides a ligand contact to ATP. The 182-residue stretch at 592–773 (ENRVGQVTGL…EEEQTLSLQN (182 aa)) folds into the Lon proteolytic domain. Active-site residues include S679 and K722. The segment covering 745 to 764 (KENPDNAKADQDRHPVKNNE) has biased composition (basic and acidic residues). The tract at residues 745 to 766 (KENPDNAKADQDRHPVKNNEEE) is disordered.

This sequence belongs to the peptidase S16 family. Homohexamer. Organized in a ring with a central cavity. ATP binding and hydrolysis do not affect the oligomeric state of the enzyme.

It is found in the cytoplasm. The enzyme catalyses Hydrolysis of proteins in presence of ATP.. Its activity is regulated as follows. Contains an allosteric site (distinct from its active site), whose occupancy by an unfolded polypeptide leads to enzyme activation. Its function is as follows. ATP-dependent serine protease that mediates the selective degradation of mutant and abnormal proteins as well as certain short-lived regulatory proteins. Required for cellular homeostasis and for survival from DNA damage and developmental changes induced by stress. Degrades polypeptides processively to yield small peptide fragments that are 5 to 10 amino acids long. Binds to DNA in a double-stranded, site-specific manner. Endogenous substrates include the regulatory proteins RcsA and SulA, the transcriptional activator SoxS, and UmuD. Its overproduction specifically inhibits translation through at least two different pathways, one of them being the YoeB-YefM toxin-antitoxin system. The chain is Lon protease from Shigella dysenteriae serotype 1 (strain Sd197).